We begin with the raw amino-acid sequence, 316 residues long: Protoheme IX farnesyltransferase (316 aa).

The next 9 helical transmembrane spans lie at 29 to 49 (IIPLLLITTAASMWIASEGRV), 54 to 74 (LLITLLGGTLAAASAQTLNCI), 102 to 122 (LIFALALGVLSFALLATFVNV), 123 to 143 (LSGCLALSGIVFYMLVYTHWL), 151 to 171 (IVIGGAAGSIPPLVGWAAVTG), 179 to 199 (VLFALIFLWTPPHFWALALMI), 224 to 241 (IWYYSLLVVPFSLLLVYP), 245 to 267 (LGILYLAIAIILGGQFLVKAWQL), and 283 to 303 (FSIFYLMLLCLAMVIDSLPVT).

Belongs to the UbiA prenyltransferase family. Protoheme IX farnesyltransferase subfamily.

It localises to the cell inner membrane. It carries out the reaction heme b + (2E,6E)-farnesyl diphosphate + H2O = Fe(II)-heme o + diphosphate. The protein operates within porphyrin-containing compound metabolism; heme O biosynthesis; heme O from protoheme: step 1/1. Its function is as follows. Converts heme B (protoheme IX) to heme O by substitution of the vinyl group on carbon 2 of heme B porphyrin ring with a hydroxyethyl farnesyl side group. This Synechocystis sp. (strain ATCC 27184 / PCC 6803 / Kazusa) protein is Protoheme IX farnesyltransferase.